Consider the following 201-residue polypeptide: Pro-P-factor (201 aa).

The first 20 residues, 1–20, serve as a signal peptide directing secretion; that stretch reads MKITAVIALLFSLAAASPIP. 5 propeptides span residues 21–31, 58–65, 92–99, 126–133, and 160–201; these read VADPGVVSVSK, EFEAAPAK, EFEAAPEK, and TEED…KFES. 2 N-linked (GlcNAc...) asparagine glycosylation sites follow: asparagine 187 and asparagine 194.

In terms of processing, proteolytically cleaved by kpr, probably at the C-terminal side of dibasic Lys-Arg residues. Glycosylated. Most of the precursor molecules are glycosylated on at least one site, but only a small proportion are glycosylated on both sites.

The protein localises to the secreted. Its function is as follows. In h- cells under nutritional starvation, P-factor induces alteration of cell morphology toward mating, arrest of the cell cycle at the G1 phase prior to the initiation of DNA synthesis and indirect transcriptional activation of the sxa2 gene which down-regulates the signaling pathway. This chain is Pro-P-factor (map2), found in Schizosaccharomyces pombe (strain 972 / ATCC 24843) (Fission yeast).